The chain runs to 201 residues: 3-isopropylmalate dehydratase small subunit (201 aa).

This sequence belongs to the LeuD family. LeuD type 1 subfamily. In terms of assembly, heterodimer of LeuC and LeuD.

The catalysed reaction is (2R,3S)-3-isopropylmalate = (2S)-2-isopropylmalate. Its pathway is amino-acid biosynthesis; L-leucine biosynthesis; L-leucine from 3-methyl-2-oxobutanoate: step 2/4. Its function is as follows. Catalyzes the isomerization between 2-isopropylmalate and 3-isopropylmalate, via the formation of 2-isopropylmaleate. The polypeptide is 3-isopropylmalate dehydratase small subunit (Mesorhizobium japonicum (strain LMG 29417 / CECT 9101 / MAFF 303099) (Mesorhizobium loti (strain MAFF 303099))).